Reading from the N-terminus, the 420-residue chain is D-tagatose-1,6-bisphosphate aldolase subunit GatZ (420 aa).

Belongs to the GatZ/KbaZ family. GatZ subfamily. As to quaternary structure, forms a complex with GatY.

It participates in carbohydrate metabolism; D-tagatose 6-phosphate degradation; D-glyceraldehyde 3-phosphate and glycerone phosphate from D-tagatose 6-phosphate: step 2/2. Its function is as follows. Component of the tagatose-1,6-bisphosphate aldolase GatYZ that is required for full activity and stability of the Y subunit. Could have a chaperone-like function for the proper and stable folding of GatY. When expressed alone, GatZ does not show any aldolase activity. Is involved in the catabolism of galactitol. This Escherichia coli O45:K1 (strain S88 / ExPEC) protein is D-tagatose-1,6-bisphosphate aldolase subunit GatZ.